We begin with the raw amino-acid sequence, 126 residues long: Histone H2B type 1-C/E/G (126 aa).

A compositionally biased stretch (low complexity) spans 1–12; sequence MPEPAKSAPAPK. The interval 1 to 36 is disordered; that stretch reads MPEPAKSAPAPKKGSKKAVTKAQKKDGKKRKRSRKE. Position 2 is an N-acetylproline (Pro-2). Position 3 is an ADP-ribosyl glutamic acid (Glu-3). An N6-(2-hydroxyisobutyryl)lysine; alternate modification is found at Lys-6. Lys-6 carries the N6-(beta-hydroxybutyryl)lysine; alternate modification. Lys-6 carries the N6-acetyllysine; alternate modification. Lys-6 is subject to N6-butyryllysine; alternate. Lys-6 is subject to N6-crotonyllysine; alternate. Lys-6 is subject to N6-lactoyllysine; alternate. Residue Lys-6 forms a Glycyl lysine isopeptide (Lys-Gly) (interchain with G-Cter in SUMO2); alternate linkage. Ser-7 is subject to ADP-ribosylserine. Position 12 is an N6-(beta-hydroxybutyryl)lysine; alternate (Lys-12). N6-acetyllysine; alternate occurs at positions 12 and 13. Residues Lys-12 and Lys-13 each carry the N6-crotonyllysine; alternate modification. Lys-12 carries the post-translational modification N6-lactoyllysine; alternate. Lys-13 is modified (N6-(2-hydroxyisobutyryl)lysine; alternate). Ser-15 carries the post-translational modification Phosphoserine; by STK4/MST1. 4 positions are modified to N6-acetyllysine; alternate: Lys-16, Lys-17, Lys-21, and Lys-24. Lys-16, Lys-17, Lys-21, and Lys-24 each carry N6-crotonyllysine; alternate. An N6-lactoyllysine; alternate mark is found at Lys-16, Lys-17, Lys-21, and Lys-24. Lys-17 is modified (N6-glutaryllysine; alternate). 2 positions are modified to N6-(2-hydroxyisobutyryl)lysine; alternate: Lys-21 and Lys-24. Lys-21 is subject to N6-(beta-hydroxybutyryl)lysine; alternate. The residue at position 21 (Lys-21) is an N6-butyryllysine; alternate. A Glycyl lysine isopeptide (Lys-Gly) (interchain with G-Cter in SUMO2); alternate cross-link involves residue Lys-21. Lys-25 carries the N6-(2-hydroxyisobutyryl)lysine modification. Lys-35 is subject to N6-(2-hydroxyisobutyryl)lysine; alternate. At Lys-35 the chain carries N6-(beta-hydroxybutyryl)lysine; alternate. Lys-35 carries the N6-crotonyllysine; alternate modification. The residue at position 35 (Lys-35) is an N6-glutaryllysine; alternate. At Lys-35 the chain carries N6-succinyllysine; alternate. A Glycyl lysine isopeptide (Lys-Gly) (interchain with G-Cter in ubiquitin); alternate cross-link involves residue Lys-35. Residue Glu-36 is modified to PolyADP-ribosyl glutamic acid. A Phosphoserine; by AMPK modification is found at Ser-37. Lys-44, Lys-47, and Lys-58 each carry N6-(2-hydroxyisobutyryl)lysine; alternate. Lys-44 is subject to N6-lactoyllysine; alternate. An N6-glutaryllysine; alternate mark is found at Lys-44 and Lys-47. An N6-methyllysine; alternate modification is found at Lys-47. N6,N6-dimethyllysine; alternate is present on Lys-58. Position 80 is a dimethylated arginine (Arg-80). Lys-86 is subject to N6-(2-hydroxyisobutyryl)lysine; alternate. Lys-86 carries the post-translational modification N6-acetyllysine; alternate. N6-lactoyllysine; alternate is present on Lys-86. At Lys-86 the chain carries N6,N6,N6-trimethyllysine; alternate. An omega-N-methylarginine mark is found at Arg-87 and Arg-93. At Lys-109 the chain carries N6-(2-hydroxyisobutyryl)lysine; alternate. At Lys-109 the chain carries N6-(beta-hydroxybutyryl)lysine; alternate. The residue at position 109 (Lys-109) is an N6-lactoyllysine; alternate. N6-glutaryllysine; alternate is present on Lys-109. An N6-methyllysine; alternate modification is found at Lys-109. An O-linked (GlcNAc) serine glycan is attached at Ser-113. Thr-116 is modified (phosphothreonine). Lys-117 and Lys-121 each carry N6-(2-hydroxyisobutyryl)lysine; alternate. N6-(beta-hydroxybutyryl)lysine; alternate is present on Lys-117. Residues Lys-117 and Lys-121 each carry the N6-lactoyllysine; alternate modification. An N6-glutaryllysine; alternate mark is found at Lys-117 and Lys-121. Residues Lys-117 and Lys-121 each carry the N6-succinyllysine; alternate modification. Position 117 is an N6-methylated lysine; alternate (Lys-117). Lys-121 is covalently cross-linked (Glycyl lysine isopeptide (Lys-Gly) (interchain with G-Cter in ubiquitin); alternate).

Belongs to the histone H2B family. As to quaternary structure, the nucleosome is a histone octamer containing two molecules each of H2A, H2B, H3 and H4 assembled in one H3-H4 heterotetramer and two H2A-H2B heterodimers. The octamer wraps approximately 147 bp of DNA. Interacts with VRK1; the interaction is mediated by the nucleosome acidic patch, a cluster of negatively charged residues of H2A and H2B forming a cleft within the nucleosome core. Monoubiquitination at Lys-35 (H2BK34Ub) by the MSL1/MSL2 dimer is required for histone H3 'Lys-4' (H3K4me) and 'Lys-79' (H3K79me) methylation and transcription activation at specific gene loci, such as HOXA9 and MEIS1 loci. Similarly, monoubiquitination at Lys-121 (H2BK120Ub) by the RNF20/40 complex gives a specific tag for epigenetic transcriptional activation and is also prerequisite for histone H3 'Lys-4' and 'Lys-79' methylation. It also functions cooperatively with the FACT dimer to stimulate elongation by RNA polymerase II. H2BK120Ub also acts as a regulator of mRNA splicing: deubiquitination by USP49 is required for efficient cotranscriptional splicing of a large set of exons. Post-translationally, phosphorylated on Ser-15 (H2BS14ph) by STK4/MST1 during apoptosis; which facilitates apoptotic chromatin condensation. Also phosphorylated on Ser-15 in response to DNA double strand breaks (DSBs), and in correlation with somatic hypermutation and immunoglobulin class-switch recombination. Phosphorylation at Ser-37 (H2BS36ph) by AMPK in response to stress promotes transcription. In terms of processing, glcNAcylation at Ser-113 promotes monoubiquitination of Lys-121. It fluctuates in response to extracellular glucose, and associates with transcribed genes. ADP-ribosylated by PARP1 or PARP2 on Ser-7 (H2BS6ADPr) in response to DNA damage. H2BS6ADPr promotes recruitment of CHD1L. Mono-ADP-ribosylated on Glu-3 (H2BE2ADPr) by PARP3 in response to single-strand breaks. Poly ADP-ribosylation on Glu-36 (H2BE35ADPr) by PARP1 regulates adipogenesis: it inhibits phosphorylation at Ser-37 (H2BS36ph), thereby blocking expression of pro-adipogenetic genes. Post-translationally, crotonylation (Kcr) is specifically present in male germ cells and marks testis-specific genes in post-meiotic cells, including X-linked genes that escape sex chromosome inactivation in haploid cells. Crotonylation marks active promoters and enhancers and confers resistance to transcriptional repressors. It is also associated with post-meiotically activated genes on autosomes. In terms of processing, hydroxybutyrylation of histones is induced by starvation. Lactylated in macrophages by EP300/P300 by using lactoyl-CoA directly derived from endogenous or exogenous lactate, leading to stimulates gene transcription.

The protein localises to the nucleus. It localises to the chromosome. Core component of nucleosome. Nucleosomes wrap and compact DNA into chromatin, limiting DNA accessibility to the cellular machineries which require DNA as a template. Histones thereby play a central role in transcription regulation, DNA repair, DNA replication and chromosomal stability. DNA accessibility is regulated via a complex set of post-translational modifications of histones, also called histone code, and nucleosome remodeling. The sequence is that of Histone H2B type 1-C/E/G from Mus musculus (Mouse).